Consider the following 451-residue polypeptide: Phosphoglucosamine mutase (451 aa).

The active-site Phosphoserine intermediate is Ser-102. Mg(2+) is bound by residues Ser-102, Asp-243, Asp-245, and Asp-247. Residue Ser-102 is modified to Phosphoserine.

The protein belongs to the phosphohexose mutase family. Requires Mg(2+) as cofactor. Activated by phosphorylation.

It catalyses the reaction alpha-D-glucosamine 1-phosphate = D-glucosamine 6-phosphate. Functionally, catalyzes the conversion of glucosamine-6-phosphate to glucosamine-1-phosphate. This chain is Phosphoglucosamine mutase, found in Brucella abortus (strain 2308).